Here is a 132-residue protein sequence, read N- to C-terminus: Protein NrdI (132 aa).

This sequence belongs to the NrdI family.

Functionally, probably involved in ribonucleotide reductase function. This chain is Protein NrdI, found in Bartonella henselae (strain ATCC 49882 / DSM 28221 / CCUG 30454 / Houston 1) (Rochalimaea henselae).